The following is a 159-amino-acid chain: Transcription elongation factor A protein-like 1 (159 aa).

The disordered stretch occupies residues 1–97 (MDKPRKENEE…PPCGVGKHKL (97 aa)). Residues 17-34 (KTDEERPPVEHSPEKQSP) show a composition bias toward basic and acidic residues. Ser28, Ser33, Ser38, Ser39, Ser43, and Ser44 each carry phosphoserine. Residues 37–54 (QSSEEQSSEEEFFPEELL) are compositionally biased toward acidic residues. The segment covering 64–80 (SEERPPQEGLSRKDLFE) has biased composition (basic and acidic residues).

This sequence belongs to the TFS-II family. TFA subfamily. In terms of processing, phosphorylation of Ser-38 and Ser-39 is critical for transcriptional repression. In terms of tissue distribution, expressed in all tissues examined. Highly expressed in heart, ovary, prostate and skeletal muscle. Moderately expressed in brain, placenta, testis and small intestine. Weakly expressed in lung, liver and spleen. Expressed in several cancer cell lines.

The protein localises to the nucleus. Its function is as follows. May be involved in transcriptional regulation. Modulates various viral and cellular promoters in a promoter context-dependent manner. For example, transcription from the FOS promoter is increased, while Rous sarcoma virus (RSV) long terminal repeat (LTR) promoter activity is repressed. Does not bind DNA directly. The sequence is that of Transcription elongation factor A protein-like 1 from Homo sapiens (Human).